Consider the following 267-residue polypeptide: Kafirin PSK8 (267 aa).

The N-terminal stretch at 1–19 is a signal peptide; it reads TKIFALLALHALLVSGTTA.

Belongs to the zein family.

Major seed storage prolamin. This chain is Kafirin PSK8, found in Sorghum bicolor (Sorghum).